The following is a 574-amino-acid chain: Proline--tRNA ligase (574 aa).

It belongs to the class-II aminoacyl-tRNA synthetase family. ProS type 1 subfamily. Homodimer.

It localises to the cytoplasm. The enzyme catalyses tRNA(Pro) + L-proline + ATP = L-prolyl-tRNA(Pro) + AMP + diphosphate. Functionally, catalyzes the attachment of proline to tRNA(Pro) in a two-step reaction: proline is first activated by ATP to form Pro-AMP and then transferred to the acceptor end of tRNA(Pro). As ProRS can inadvertently accommodate and process non-cognate amino acids such as alanine and cysteine, to avoid such errors it has two additional distinct editing activities against alanine. One activity is designated as 'pretransfer' editing and involves the tRNA(Pro)-independent hydrolysis of activated Ala-AMP. The other activity is designated 'posttransfer' editing and involves deacylation of mischarged Ala-tRNA(Pro). The misacylated Cys-tRNA(Pro) is not edited by ProRS. The protein is Proline--tRNA ligase of Teredinibacter turnerae (strain ATCC 39867 / T7901).